A 701-amino-acid polypeptide reads, in one-letter code: Polyribonucleotide nucleotidyltransferase (701 aa).

Positions 487 and 493 each coordinate Mg(2+). The region spanning 554–613 is the KH domain; that stretch reads PTMIAMKIDTDKIRDVIGKGGATIRAICEETKASIDIEDDGSIKIFGESKEAAEAARQRV. Residues 623–691 enclose the S1 motif domain; that stretch reads GKIYLGKVER…NRGRIKLSIK (69 aa).

This sequence belongs to the polyribonucleotide nucleotidyltransferase family. As to quaternary structure, component of the RNA degradosome, which is a multiprotein complex involved in RNA processing and mRNA degradation. Mg(2+) is required as a cofactor.

The protein resides in the cytoplasm. The enzyme catalyses RNA(n+1) + phosphate = RNA(n) + a ribonucleoside 5'-diphosphate. In terms of biological role, involved in mRNA degradation. Catalyzes the phosphorolysis of single-stranded polyribonucleotides processively in the 3'- to 5'-direction. The sequence is that of Polyribonucleotide nucleotidyltransferase from Pseudomonas syringae pv. tomato (strain ATCC BAA-871 / DC3000).